A 101-amino-acid polypeptide reads, in one-letter code: NAD(P)H-quinone oxidoreductase subunit 4L, chloroplastic (101 aa).

The next 3 helical transmembrane spans lie at 2-22 (ILEH…YGLI), 32-52 (MCLE…SDFF), and 61-81 (IFCI…LAIV).

Belongs to the complex I subunit 4L family. As to quaternary structure, NDH is composed of at least 16 different subunits, 5 of which are encoded in the nucleus.

It is found in the plastid. It localises to the chloroplast thylakoid membrane. The enzyme catalyses a plastoquinone + NADH + (n+1) H(+)(in) = a plastoquinol + NAD(+) + n H(+)(out). It catalyses the reaction a plastoquinone + NADPH + (n+1) H(+)(in) = a plastoquinol + NADP(+) + n H(+)(out). NDH shuttles electrons from NAD(P)H:plastoquinone, via FMN and iron-sulfur (Fe-S) centers, to quinones in the photosynthetic chain and possibly in a chloroplast respiratory chain. The immediate electron acceptor for the enzyme in this species is believed to be plastoquinone. Couples the redox reaction to proton translocation, and thus conserves the redox energy in a proton gradient. This is NAD(P)H-quinone oxidoreductase subunit 4L, chloroplastic from Arabis hirsuta (Hairy rock-cress).